We begin with the raw amino-acid sequence, 415 residues long: Nuclear hormone receptor family member nhr-153 (415 aa).

A DNA-binding region (nuclear receptor) is located at residues 26-105 (PSVCQICRNP…AGMNPMAIQA (80 aa)). 2 NR C4-type zinc fingers span residues 29–49 (CQICRNPAIGYHYEVPSCNGC) and 65–88 (CFKVSNCLDGNDVIDTSKRVCRAC). In terms of domain architecture, NR LBD spans 170–406 (DQRDLSTALS…DPEVLKKKCI (237 aa)).

Belongs to the nuclear hormone receptor family.

The protein resides in the nucleus. In terms of biological role, orphan nuclear receptor. This is Nuclear hormone receptor family member nhr-153 (nhr-153) from Caenorhabditis elegans.